The chain runs to 498 residues: Glycerol kinase (498 aa).

Residue T13 participates in ADP binding. The ATP site is built by T13, T14, and S15. Position 13 (T13) interacts with sn-glycerol 3-phosphate. R17 is an ADP binding site. Positions 83, 84, 135, and 244 each coordinate sn-glycerol 3-phosphate. Glycerol is bound by residues R83, E84, Y135, D244, and Q245. ADP-binding residues include T266 and G309. Residues T266, G309, Q313, and G410 each contribute to the ATP site. Positions 410 and 414 each coordinate ADP.

This sequence belongs to the FGGY kinase family.

It carries out the reaction glycerol + ATP = sn-glycerol 3-phosphate + ADP + H(+). It functions in the pathway polyol metabolism; glycerol degradation via glycerol kinase pathway; sn-glycerol 3-phosphate from glycerol: step 1/1. With respect to regulation, inhibited by fructose 1,6-bisphosphate (FBP). Key enzyme in the regulation of glycerol uptake and metabolism. Catalyzes the phosphorylation of glycerol to yield sn-glycerol 3-phosphate. The chain is Glycerol kinase from Koribacter versatilis (strain Ellin345).